The primary structure comprises 269 residues: MKSGFVVRSTISSWESAERFCRQFSLPLLDMQAKHNQEVFQLIFDHQNVHLLDCRAKKPLTLMVDFVTGSRDHRRKFGGGAGQAVAKAVGVKGNRTLHVLDATAGLGGDAFVLACLGSRVTMIERSPVAYALLADGLKRGLLQAEEAGDDELLAILQRMTLVPNDGSDWMRDQLASSDSEQPDVVYLDPMFPEKSKKALAKKEMQIFQEVVGGDEDADKLFEPAFALAKYRVVVKRPKIAPLLNGQEPSVQLVGKSSRFDVYAKKKLPE.

S-adenosyl-L-methionine-binding positions include 124-125 (ER) and Asp-188.

This sequence belongs to the methyltransferase superfamily. RsmJ family.

The protein resides in the cytoplasm. It catalyses the reaction guanosine(1516) in 16S rRNA + S-adenosyl-L-methionine = N(2)-methylguanosine(1516) in 16S rRNA + S-adenosyl-L-homocysteine + H(+). In terms of biological role, specifically methylates the guanosine in position 1516 of 16S rRNA. This chain is Ribosomal RNA small subunit methyltransferase J, found in Saccharophagus degradans (strain 2-40 / ATCC 43961 / DSM 17024).